Consider the following 353-residue polypeptide: Protein XRP2 (353 aa).

Residues 1–37 (MGCFFSKKAKRKRNSEEEQPQQDGEEPKQYSWDKREK) form a disordered region. Residue glycine 2 is the site of N-myristoyl glycine attachment. Cysteine 3 carries the S-palmitoyl cysteine lipid modification. Over residues 25-37 (EEPKQYSWDKREK) the composition is skewed to basic and acidic residues. A C-CAP/cofactor C-like domain is found at 27–182 (PKQYSWDKRE…TWSNIHDFTP (156 aa)). GTP contacts are provided by residues 101–102 (GS) and 118–121 (QQFR).

The protein belongs to the TBCC family. Post-translationally, myristoylated on Gly-2; which may be required for membrane targeting. In terms of processing, palmitoylated on Cys-3; which may be required for plasma membrane targeting.

It localises to the cell membrane. Functionally, acts as a GTPase-activating protein (GAP) for tubulin in concert with tubulin-specific chaperone C, but does not enhance tubulin heterodimerization. Acts as a GTPase-activating protein. May act as guanine nucleotide dissociation inhibitor towards ADP-ribosylation factor-like proteins. The sequence is that of Protein XRP2 (rp2) from Xenopus laevis (African clawed frog).